The sequence spans 977 residues: Macrophage colony-stimulating factor 1 receptor (977 aa).

The signal sequence occupies residues 1 to 19 (MELGPPLVLLLATVWHGQG). Topologically, residues 20 to 515 (APVIEPSGPE…QLPDESLFTP (496 aa)) are extracellular. Ig-like C2-type domains follow at residues 24-104 (EPSG…VKDP), 107-197 (SWNL…KVNR), 204-298 (QIKL…VVES), 299-397 (AYLN…LTLR), and 398-503 (YPPE…SLGQ). 3 cysteine pairs are disulfide-bonded: cysteine 42/cysteine 84, cysteine 127/cysteine 177, and cysteine 224/cysteine 278. Asparagine 45 and asparagine 73 each carry an N-linked (GlcNAc...) asparagine glycan. Asparagine 302, asparagine 335, asparagine 389, asparagine 410, asparagine 449, asparagine 478, and asparagine 491 each carry an N-linked (GlcNAc...) asparagine glycan. A disulfide bridge connects residues cysteine 417 and cysteine 483. A helical transmembrane segment spans residues 516 to 536 (VVVACMSVMSLLVLLLLLLLY). Residues 537–977 (KYKQKPKYQV…LLQPNNYQFC (441 aa)) lie on the Cytoplasmic side of the membrane. A regulatory juxtamembrane domain region spans residues 540–572 (QKPKYQVRWKIIERYEGNSYTFIDPTQLPYNEK). Phosphotyrosine; by autocatalysis is present on residues tyrosine 544 and tyrosine 559. In terms of domain architecture, Protein kinase spans 580–913 (LQFGKTLGAG…ICFLLQEQAR (334 aa)). ATP contacts are provided by residues 586–594 (LGAGAFGKV) and lysine 614. Residues tyrosine 697 and tyrosine 706 each carry the phosphotyrosine; by autocatalysis modification. The residue at position 711 (serine 711) is a Phosphoserine. A Phosphotyrosine; by autocatalysis modification is found at tyrosine 721. Aspartate 776 acts as the Proton acceptor in catalysis. Residues 794-816 (DFGLARDIMNDSNYVVKGNARLP) are activation loop. Phosphotyrosine; by autocatalysis is present on residues tyrosine 807 and tyrosine 921. The disordered stretch occupies residues 921-957 (YANLPSSGGSSGSDSGGGSSGGSSSEPEEESSSEHLA). The segment covering 929 to 941 (GSSGSDSGGGSSG) has biased composition (gly residues). At tyrosine 974 the chain carries Phosphotyrosine; by autocatalysis.

Belongs to the protein kinase superfamily. Tyr protein kinase family. CSF-1/PDGF receptor subfamily. Monomer. Homodimer. Interacts with CSF1 and IL34. Interaction with dimeric CSF1 or IL34 leads to receptor homodimerization. Interacts with INPPL1/SHIP2 and THOC5. Interacts (tyrosine phosphorylated) with PLCG2 (via SH2 domain). Interacts (tyrosine phosphorylated) with PIK3R1 (via SH2 domain). Interacts (tyrosine phosphorylated) with FYN, YES1 and SRC (via SH2 domain). Interacts (tyrosine phosphorylated) with CBL, GRB2 and SLA2. Autophosphorylated in response to CSF1 or IL34 binding. Phosphorylation at Tyr-559 is important for normal down-regulation of signaling by ubiquitination, internalization and degradation. Phosphorylation at Tyr-559 and Tyr-807 is important for interaction with SRC family members, including FYN, YES1 and SRC, and for subsequent activation of these protein kinases. Phosphorylation at Tyr-697 and Tyr-921 is important for interaction with GRB2. Phosphorylation at Tyr-721 is important for interaction with PIK3R1. Phosphorylation at Tyr-721 and Tyr-807 is important for interaction with PLCG2. Phosphorylation at Tyr-974 is important for interaction with CBL. Dephosphorylation by PTPN2 negatively regulates downstream signaling and macrophage differentiation. Post-translationally, ubiquitinated. Becomes rapidly polyubiquitinated after autophosphorylation, leading to its degradation. As to expression, widely expressed.

It localises to the cell membrane. It catalyses the reaction L-tyrosyl-[protein] + ATP = O-phospho-L-tyrosyl-[protein] + ADP + H(+). Its activity is regulated as follows. Present in an inactive conformation in the absence of bound ligand. CSF1 or IL34 binding leads to dimerization and activation by autophosphorylation on tyrosine residues. Inhibited by imatinib/STI-571 (Gleevec), dasatinib, sunitinib/SU11248, lestaurtinib/CEP-701, midostaurin/PKC-412, Ki20227, linifanib/ABT-869, Axitinib/AG013736, sorafenib/BAY 43-9006 and GW2580. Its function is as follows. Tyrosine-protein kinase that acts as a cell-surface receptor for CSF1 and IL34 and plays an essential role in the regulation of survival, proliferation and differentiation of hematopoietic precursor cells, especially mononuclear phagocytes, such as macrophages and monocytes. Promotes the release of pro-inflammatory chemokines in response to IL34 and CSF1, and thereby plays an important role in innate immunity and in inflammatory processes. Plays an important role in the regulation of osteoclast proliferation and differentiation, the regulation of bone resorption, and is required for normal bone and tooth development. Required for normal male and female fertility, and for normal development of milk ducts and acinar structures in the mammary gland during pregnancy. Promotes reorganization of the actin cytoskeleton, regulates formation of membrane ruffles, cell adhesion and cell migration, and promotes cancer cell invasion. Activates several signaling pathways in response to ligand binding, including the ERK1/2 and the JNK pathway. Phosphorylates PIK3R1, PLCG2, GRB2, SLA2 and CBL. Activation of PLCG2 leads to the production of the cellular signaling molecules diacylglycerol and inositol 1,4,5-trisphosphate, that then lead to the activation of protein kinase C family members, especially PRKCD. Phosphorylation of PIK3R1, the regulatory subunit of phosphatidylinositol 3-kinase, leads to activation of the AKT1 signaling pathway. Activated CSF1R also mediates activation of the MAP kinases MAPK1/ERK2 and/or MAPK3/ERK1, and of the SRC family kinases SRC, FYN and YES1. Activated CSF1R transmits signals both via proteins that directly interact with phosphorylated tyrosine residues in its intracellular domain, or via adapter proteins, such as GRB2. Promotes activation of STAT family members STAT3, STAT5A and/or STAT5B. Promotes tyrosine phosphorylation of SHC1 and INPP5D/SHIP-1. Receptor signaling is down-regulated by protein phosphatases, such as INPP5D/SHIP-1, that dephosphorylate the receptor and its downstream effectors, and by rapid internalization of the activated receptor. In the central nervous system, may play a role in the development of microglia macrophages. This chain is Macrophage colony-stimulating factor 1 receptor (Csf1r), found in Mus musculus (Mouse).